We begin with the raw amino-acid sequence, 253 residues long: Chloride intracellular channel protein 4 (253 aa).

Ala-2 is subject to N-acetylalanine. Residues 2-101 are required for insertion into the membrane; it reads ALSMPLNGLK…EEFLEEVLCP (100 aa). Ser-4 is modified (phosphoserine). Lys-24 is modified (N6-acetyllysine). The chain crosses the membrane as a helical span at residues 37–57; the sequence is FSQRLFMILWLKGVVFSVSTV. Residues 81–244 enclose the GST C-terminal domain; it reads NSEVKTDVNK…PSDKEVEIAY (164 aa). Lys-130 carries the N6-acetyllysine modification. 3 positions are modified to phosphoserine: Ser-132, Ser-167, and Ser-236. The residue at position 244 (Tyr-244) is a Phosphotyrosine.

Belongs to the chloride channel CLIC family. In terms of assembly, monomer. Interacts with HRH3.

Its subcellular location is the cytoplasm. The protein resides in the cytoskeleton. The protein localises to the microtubule organizing center. It is found in the centrosome. It localises to the cytoplasmic vesicle membrane. Its subcellular location is the nucleus. The protein resides in the cell membrane. The protein localises to the mitochondrion. It is found in the cell junction. The enzyme catalyses chloride(in) = chloride(out). The catalysed reaction is thiocyanate(in) = thiocyanate(out). It catalyses the reaction nitrate(in) = nitrate(out). It carries out the reaction iodide(out) = iodide(in). The enzyme catalyses bromide(in) = bromide(out). The catalysed reaction is fluoride(in) = fluoride(out). It catalyses the reaction choline(out) = choline(in). Functionally, in the soluble state, catalyzes glutaredoxin-like thiol disulfide exchange reactions with reduced glutathione as electron donor. Can insert into membranes and form voltage-dependent multi-ion conductive channels. Membrane insertion seems to be redox-regulated and may occur only under oxidizing conditions. Has alternate cellular functions like a potential role in angiogenesis or in maintaining apical-basolateral membrane polarity during mitosis and cytokinesis. Could also promote endothelial cell proliferation and regulate endothelial morphogenesis (tubulogenesis). Promotes cell-surface expression of HRH3. The polypeptide is Chloride intracellular channel protein 4 (CLIC4) (Pongo abelii (Sumatran orangutan)).